We begin with the raw amino-acid sequence, 185 residues long: Lysozyme g (185 aa).

Residue Gln1 is modified to Pyrrolidone carboxylic acid. 2 disulfides stabilise this stretch: Cys4-Cys60 and Cys18-Cys29. Residues Glu73 and Asp86 contribute to the active site.

This sequence belongs to the glycosyl hydrolase 23 family.

The protein localises to the secreted. It catalyses the reaction Hydrolysis of (1-&gt;4)-beta-linkages between N-acetylmuramic acid and N-acetyl-D-glucosamine residues in a peptidoglycan and between N-acetyl-D-glucosamine residues in chitodextrins.. In Casuarius casuarius (Southern cassowary), this protein is Lysozyme g.